A 746-amino-acid polypeptide reads, in one-letter code: Mediator of RNA polymerase II transcription subunit 25 (746 aa).

The interval 1–226 (MVPGSEGPAR…PRHMVLVRGL (226 aa)) is interaction with the Mediator complex. 2 disordered regions span residues 233–273 (GSAP…QQYQ) and 298–390 (GLGP…PALG). Pro residues predominate over residues 238 to 251 (PLQPKQPVPLPPAA). Low complexity predominate over residues 252 to 262 (PAGATLSTAPQ). Positions 329–342 (PPGPPGAPKPPPAS) are enriched in pro residues. The segment covering 343–354 (QPSLVSTVAPGP) has biased composition (low complexity). The interval 389-543 (LGGQQSVSNK…VNGIRQVITN (155 aa)) is interaction with VP16. Residues 395–545 (VSNKLLAWSG…GIRQVITNHK (151 aa)) form an interaction with CREBBP region. The segment at 548-746 (QQQKLEQQRG…MEDDILMDLI (199 aa)) is disordered. Interaction with RARA stretches follow at residues 563–652 (APPG…LLNP) and 639–706 (PGAN…WPAQ). The span at 599 to 610 (AAAGQPQPQGAA) shows a compositional bias: low complexity. Pro residues predominate over residues 611–633 (PAPPGAPQGPPGAAPGPPPPGPL). The LXXLL motif motif lies at 645–649 (LRSLL). Composition is skewed to pro residues over residues 651–663 (NPPPPQTGVPPPQ), 672–682 (PGAPALLPPPH), and 690–701 (LGPPLLHPPPAQ). An Asymmetric dimethylarginine modification is found at R724. Acidic residues predominate over residues 737-746 (MEDDILMDLI).

The protein belongs to the Mediator complex subunit 25 family. In terms of assembly, component of the Mediator complex, which is composed of MED1, MED4, MED6, MED7, MED8, MED9, MED10, MED11, MED12, MED13, MED13L, MED14, MED15, MED16, MED17, MED18, MED19, MED20, MED21, MED22, MED23, MED24, MED25, MED26, MED27, MED29, MED30, MED31, CCNC, CDK8 and CDC2L6/CDK11. The MED12, MED13, CCNC and CDK8 subunits form a distinct module termed the CDK8 module. Mediator containing the CDK8 module is less active than Mediator lacking this module in supporting transcriptional activation. Individual preparations of the Mediator complex lacking one or more distinct subunits have been variously termed ARC, CRSP, DRIP, PC2, SMCC and TRAP. Interacts with CREBBP. Interacts with ESR1, GR, RARA, RXRA and THRB in a ligand-dependent fashion. Binds the Herpes simplex virus activator VP16.

The protein localises to the nucleus. Functionally, component of the Mediator complex, a coactivator involved in the regulated transcription of nearly all RNA polymerase II-dependent genes. Mediator functions as a bridge to convey information from gene-specific regulatory proteins to the basal RNA polymerase II transcription machinery. Mediator is recruited to promoters by direct interactions with regulatory proteins and serves as a scaffold for the assembly of a functional preinitiation complex with RNA polymerase II and the general transcription factors. Required for RARA/RXRA-mediated transcription. This Bos taurus (Bovine) protein is Mediator of RNA polymerase II transcription subunit 25 (MED25).